Here is a 380-residue protein sequence, read N- to C-terminus: MSDQMRIPCVIMRAGTSKGIFLKGNDLPADQELRDKVILRIFGSPDVRQIDGLAGADPLTSKLAIIGPSTHPDADVDYTFAQVSITDAVVDYNGNCGNISAGVGPFAIDESFVKAVEPMTRVCIHNTNTGKLLYAEVEVEDGKAKVSGDCKIDGVPGTNAPELMDFSDTAGAATGKVLPTGNVVDVLSTSKGDIDVSIVDVANPCIFVHAKDVNMTGTETPDVINGNADLLAYLEEIRAKCCVKIGMAATEKEASEKSPAFPMIAFVTKPEDYVDFSTGNTISGDDVDLVSRLMFMQVLHKTYAGTATACTGSAARIPGTIVNQVLRDTGDEDTVRIGHPAGVIPVVSIVKDGKVEKAALIRTARRIMEGYVYVEKAKLV.

Belongs to the PrpF family. As to quaternary structure, homotetramer.

The enzyme catalyses 2-methylene-3-methylsuccinate = dimethylmaleate. It participates in cofactor degradation; nicotinate degradation; propanoate and pyruvate from 6-hydroxynicotinate: step 6/8. With respect to regulation, inhibited by oxidized glutathione, p-chloromercuriphenylsulfonic acid and iodoacetic acid. Not inhibited by the chelating agent alpha,alpha-dipyridyl. Activity is slightly increased by EDTA. Not activated by Fe(2+), Mg(2+), Mn(2+) or Ca(2+). Unaffected by K(+), Na(+), NH4(+), Rb(+) or Li(+). Its function is as follows. Catalyzes the reversible isomerization of (R)-3-methylitaconate to 2,3-dimethylmaleate. Has very low isomerase activity with itaconate. The chain is 3-methylitaconate isomerase (mii) from Eubacterium barkeri (Clostridium barkeri).